The sequence spans 229 residues: 3-isopropylmalate dehydratase small subunit (229 aa).

The tract at residues 198–229 (LPVKREPEQPIESAREGEYPDWQGPLADRGII) is disordered. Over residues 200 to 215 (VKREPEQPIESAREGE) the composition is skewed to basic and acidic residues.

Belongs to the LeuD family. LeuD type 1 subfamily. Heterodimer of LeuC and LeuD.

The enzyme catalyses (2R,3S)-3-isopropylmalate = (2S)-2-isopropylmalate. Its pathway is amino-acid biosynthesis; L-leucine biosynthesis; L-leucine from 3-methyl-2-oxobutanoate: step 2/4. In terms of biological role, catalyzes the isomerization between 2-isopropylmalate and 3-isopropylmalate, via the formation of 2-isopropylmaleate. This Bifidobacterium adolescentis (strain ATCC 15703 / DSM 20083 / NCTC 11814 / E194a) protein is 3-isopropylmalate dehydratase small subunit.